Consider the following 395-residue polypeptide: Elongation factor Tu (395 aa).

A tr-type G domain is found at 10-204; the sequence is KPHLNIGTIG…TVDNYIKEPI (195 aa). The segment at 19–26 is G1; the sequence is GHVDHGKT. Position 19–26 (19–26) interacts with GTP; the sequence is GHVDHGKT. T26 is a binding site for Mg(2+). The segment at 60–64 is G2; it reads GITIN. The tract at residues 81-84 is G3; it reads DCPG. GTP is bound by residues 81–85 and 136–139; these read DCPGH and NKVD. Positions 136–139 are G4; the sequence is NKVD. Residues 174 to 176 are G5; the sequence is SAL.

The protein belongs to the TRAFAC class translation factor GTPase superfamily. Classic translation factor GTPase family. EF-Tu/EF-1A subfamily. Monomer.

Its subcellular location is the cytoplasm. It catalyses the reaction GTP + H2O = GDP + phosphate + H(+). Functionally, GTP hydrolase that promotes the GTP-dependent binding of aminoacyl-tRNA to the A-site of ribosomes during protein biosynthesis. The protein is Elongation factor Tu of Karelsulcia muelleri (strain GWSS) (Sulcia muelleri).